Consider the following 146-residue polypeptide: D-aminoacyl-tRNA deacylase (146 aa).

A Gly-cisPro motif, important for rejection of L-amino acids motif is present at residues 137-138; the sequence is GP.

The protein belongs to the DTD family. In terms of assembly, homodimer.

Its subcellular location is the cytoplasm. It carries out the reaction glycyl-tRNA(Ala) + H2O = tRNA(Ala) + glycine + H(+). The catalysed reaction is a D-aminoacyl-tRNA + H2O = a tRNA + a D-alpha-amino acid + H(+). Functionally, an aminoacyl-tRNA editing enzyme that deacylates mischarged D-aminoacyl-tRNAs. Also deacylates mischarged glycyl-tRNA(Ala), protecting cells against glycine mischarging by AlaRS. Acts via tRNA-based rather than protein-based catalysis; rejects L-amino acids rather than detecting D-amino acids in the active site. By recycling D-aminoacyl-tRNA to D-amino acids and free tRNA molecules, this enzyme counteracts the toxicity associated with the formation of D-aminoacyl-tRNA entities in vivo and helps enforce protein L-homochirality. In Halalkalibacterium halodurans (strain ATCC BAA-125 / DSM 18197 / FERM 7344 / JCM 9153 / C-125) (Bacillus halodurans), this protein is D-aminoacyl-tRNA deacylase.